A 311-amino-acid chain; its full sequence is Ornithine carbamoyltransferase (311 aa).

Carbamoyl phosphate contacts are provided by residues Gln-85, Arg-109, and 136–139; that span reads HPCQ. L-ornithine-binding positions include Asn-167, Asp-231, and 235–236; that span reads SM. Carbamoyl phosphate is bound by residues 271 to 272 and Arg-299; that span reads CL.

It belongs to the aspartate/ornithine carbamoyltransferase superfamily. OTCase family.

It is found in the cytoplasm. It catalyses the reaction carbamoyl phosphate + L-ornithine = L-citrulline + phosphate + H(+). Its pathway is amino-acid biosynthesis; L-arginine biosynthesis; L-arginine from L-ornithine and carbamoyl phosphate: step 1/3. Reversibly catalyzes the transfer of the carbamoyl group from carbamoyl phosphate (CP) to the N(epsilon) atom of ornithine (ORN) to produce L-citrulline. The protein is Ornithine carbamoyltransferase (argF) of Geobacillus stearothermophilus (Bacillus stearothermophilus).